A 257-amino-acid polypeptide reads, in one-letter code: 3-methyl-2-oxobutanoate hydroxymethyltransferase (257 aa).

Mg(2+) contacts are provided by Asp-44 and Asp-83. Residues 44–45 (DS), Asp-83, and Lys-113 contribute to the 3-methyl-2-oxobutanoate site. Glu-115 provides a ligand contact to Mg(2+). Glu-182 functions as the Proton acceptor in the catalytic mechanism.

Belongs to the PanB family. As to quaternary structure, homodecamer; pentamer of dimers. It depends on Mg(2+) as a cofactor.

The protein localises to the cytoplasm. The catalysed reaction is 3-methyl-2-oxobutanoate + (6R)-5,10-methylene-5,6,7,8-tetrahydrofolate + H2O = 2-dehydropantoate + (6S)-5,6,7,8-tetrahydrofolate. It functions in the pathway cofactor biosynthesis; (R)-pantothenate biosynthesis; (R)-pantoate from 3-methyl-2-oxobutanoate: step 1/2. Functionally, catalyzes the reversible reaction in which hydroxymethyl group from 5,10-methylenetetrahydrofolate is transferred onto alpha-ketoisovalerate to form ketopantoate. This is 3-methyl-2-oxobutanoate hydroxymethyltransferase from Rippkaea orientalis (strain PCC 8801 / RF-1) (Cyanothece sp. (strain PCC 8801)).